The primary structure comprises 184 residues: Ras-related protein Rap-1b-like protein (184 aa).

Residue 10 to 18 coordinates GTP; sequence GSRGVGKSA. Positions 32 to 40 match the Effector region motif; it reads YDPTIEDSY. Residues 57 to 61, 116 to 119, and 147 to 149 contribute to the GTP site; these read DTAGT, NKCD, and SAK. Residue cysteine 181 is the site of S-geranylgeranyl cysteine attachment. The propeptide at 182-184 is removed in mature form; it reads QLL.

The protein belongs to the small GTPase superfamily. Ras family.

Its subcellular location is the cell membrane. The protein localises to the cytoplasm. The protein resides in the cytosol. It catalyses the reaction GTP + H2O = GDP + phosphate + H(+). Functionally, probable GTP-binding protein with intrinsic GTPase activity. This Homo sapiens (Human) protein is Ras-related protein Rap-1b-like protein.